Reading from the N-terminus, the 240-residue chain is MADKKAPASGWPIVSGEYVVGNPESCVAVVTLGSHGLDEAAIEAGAAISGPCHTENLGIEKVVANYISNPNIRFMLVTGSEVQGHITGQCFKALYENGIGDDGGIIGAKGAIPFLENAGQDAISRFQNQLVEIVDLIDVEDTGKISSAIKDCISKDPGAFEEDPMILDLEGGGGEAGADESTSIKPAAPETVLLEARMRMISEKINDAALIAKFNSGYYNGKIQGIAIGLFLSLLIFSLL.

The Cytoplasmic portion of the chain corresponds to 1–216; it reads MADKKAPASG…DAALIAKFNS (216 aa). A 5-hydroxybenzimidazolylcob(I)amide-binding site is contributed by H85. Residues 217 to 234 form a helical membrane-spanning segment; it reads GYYNGKIQGIAIGLFLSL. At 235–240 the chain is on the extracellular side; it reads LIFSLL.

The protein belongs to the MtrA family. As to quaternary structure, the complex is composed of 8 subunits; MtrA, MtrB, MtrC, MtrD, MtrE, MtrF, MtrG and MtrH. 5-hydroxybenzimidazolylcob(I)amide serves as cofactor.

Its subcellular location is the cell membrane. It carries out the reaction 5-methyl-5,6,7,8-tetrahydromethanopterin + coenzyme M + 2 Na(+)(in) = 5,6,7,8-tetrahydromethanopterin + methyl-coenzyme M + 2 Na(+)(out). It functions in the pathway one-carbon metabolism; methanogenesis from CO(2); methyl-coenzyme M from 5,10-methylene-5,6,7,8-tetrahydromethanopterin: step 2/2. In terms of biological role, part of a complex that catalyzes the formation of methyl-coenzyme M and tetrahydromethanopterin from coenzyme M and methyl-tetrahydromethanopterin. This is an energy-conserving, sodium-ion translocating step. This Methanococcus aeolicus (strain ATCC BAA-1280 / DSM 17508 / OCM 812 / Nankai-3) protein is Tetrahydromethanopterin S-methyltransferase subunit A.